The following is a 700-amino-acid chain: Interleukin-1 receptor accessory protein-like 1-B (700 aa).

Residues 1–18 form the signal peptide; it reads MRSRVPLQILLYAAVIRS. Over 19 to 357 the chain is Extracellular; the sequence is LKVVSKRGSV…QLSRRELMYT (339 aa). One can recognise an Ig-like C2-type 1 domain in the interval 32–134; sequence TDWSVDYLRY…YCMKVSMALT (103 aa). The cysteines at positions 53 and 118 are disulfide-linked. N-linked (GlcNAc...) asparagine glycosylation is found at N63, N122, N138, N213, N264, and N331. Ig-like C2-type domains are found at residues 143 to 232 and 242 to 350; these read CYNS…TELT and PKIL…IQLS. An intrachain disulfide couples C164 to C216. A disulfide bridge links C267 with C334. A helical membrane pass occupies residues 358 to 378; the sequence is VELAGGLGAILLMLIFLVSLY. At 379–700 the chain is on the cytoplasmic side; that stretch reads KCYRIELMLF…RETSISSVIW (322 aa). The TIR domain occupies 403–559; it reads KDYDAYVSYT…RFWKQLQYEM (157 aa). E491 is a catalytic residue. Residues 564–700 form a required for synaptic vesicle accumulation during synaptogenesis region; it reads PEPKLSHEQV…RETSISSVIW (137 aa).

Belongs to the interleukin-1 receptor family.

The protein localises to the cell membrane. Its subcellular location is the cytoplasm. The enzyme catalyses NAD(+) + H2O = ADP-D-ribose + nicotinamide + H(+). May regulate secretion and presynaptic differentiation through inhibition of the activity of N-type voltage-gated calcium channel. During presynaptic differentiation may regulate both synaptic vesicle accumulation in axon terminals and subsequent axon terminal remodeling. This Danio rerio (Zebrafish) protein is Interleukin-1 receptor accessory protein-like 1-B (il1rapl1b).